We begin with the raw amino-acid sequence, 448 residues long: Asparagine--tRNA ligase (448 aa).

This sequence belongs to the class-II aminoacyl-tRNA synthetase family. Homodimer.

Its subcellular location is the cytoplasm. It catalyses the reaction tRNA(Asn) + L-asparagine + ATP = L-asparaginyl-tRNA(Asn) + AMP + diphosphate + H(+). In Streptococcus pyogenes serotype M2 (strain MGAS10270), this protein is Asparagine--tRNA ligase.